Reading from the N-terminus, the 252-residue chain is Indole-3-glycerol phosphate synthase (252 aa).

Belongs to the TrpC family.

It catalyses the reaction 1-(2-carboxyphenylamino)-1-deoxy-D-ribulose 5-phosphate + H(+) = (1S,2R)-1-C-(indol-3-yl)glycerol 3-phosphate + CO2 + H2O. It functions in the pathway amino-acid biosynthesis; L-tryptophan biosynthesis; L-tryptophan from chorismate: step 4/5. This Bacillus licheniformis (strain ATCC 14580 / DSM 13 / JCM 2505 / CCUG 7422 / NBRC 12200 / NCIMB 9375 / NCTC 10341 / NRRL NRS-1264 / Gibson 46) protein is Indole-3-glycerol phosphate synthase.